We begin with the raw amino-acid sequence, 841 residues long: Neuronal tyrosine-phosphorylated phosphoinositide-3-kinase adapter 1 (841 aa).

5 disordered regions span residues 1–45 (MNLL…PGVR), 64–448 (PASQ…PAAL), 655–679 (RAWNGSAEGPGKVEREDRGPGTSGI), 745–769 (RPCSQPRDALSQPHPALPLPLPLPP), and 812–833 (LPSWRRGPEPRKSGTPPCRRQH). Residues 8–25 (TKLEWRQHKEEEAKRSSS) show a composition bias toward basic and acidic residues. Over residues 26 to 39 (KEVAPAGSAGPAAG) the composition is skewed to low complexity. An involved in CYFIP1- and NCKAP1-binding region spans residues 76 to 186 (SAMAPRSLSC…DESCPPGPSP (111 aa)). A compositionally biased stretch (gly residues) spans 94–103 (VGGGPGGASG). The segment covering 114 to 123 (PPAKPRRHPS) has biased composition (basic residues). Residues 167-176 (SPNTQLSVSF) are compositionally biased toward polar residues. Residues 224-243 (FRGGGRSGGGLAGPPLGGGG) are compositionally biased toward gly residues. Over residues 252-261 (SDSEESEAIY) the composition is skewed to acidic residues. Pro residues predominate over residues 279–295 (GPPPLTATSPPQQPHAL). A compositionally biased stretch (pro residues) spans 759 to 769 (PALPLPLPLPP).

Belongs to the NYAP family. In terms of assembly, interacts with ACOT9, ARHGAP26 and PIK3R2. Interacts with components of the WAVE1 complex, CYFIP1 and NCKAP1; this interaction mediates PI3K-WAVE1 association and actin cytoskeleton remodeling. In terms of processing, phosphorylated on tyrosine residues by FYN upon stimulation with CNTN5.

Activates PI3K and concomitantly recruits the WAVE1 complex to the close vicinity of PI3K and regulates neuronal morphogenesis. The sequence is that of Neuronal tyrosine-phosphorylated phosphoinositide-3-kinase adapter 1 (NYAP1) from Homo sapiens (Human).